The primary structure comprises 320 residues: Peptidase 1 (320 aa).

The signal sequence occupies residues 1 to 18 (MKIVLAIASLLALSAVYA). The propeptide at 19-98 (RPSSIKTFEE…LKTQFDLNAE (80 aa)) is activation peptide. 3 disulfides stabilise this stretch: cysteine 102-cysteine 215, cysteine 129-cysteine 169, and cysteine 163-cysteine 201. The active site involves cysteine 132. Residue asparagine 150 is glycosylated (N-linked (GlcNAc...) asparagine). Catalysis depends on residues histidine 268 and asparagine 288.

Belongs to the peptidase C1 family. Post-translationally, N-glycosylated. N-glycanase treatment does not completely remove carbohydrates, suggesting that the protein contains additional glycosylation sites.

It localises to the secreted. The catalysed reaction is Broad endopeptidase specificity.. In terms of biological role, thiol protease, with a preference for substrates with a large hydrophobic side chain in the P2 position, or with basic residues. This Dermatophagoides pteronyssinus (European house dust mite) protein is Peptidase 1 (DERP1).